The chain runs to 301 residues: Probable 2-oxoglutarate-dependent dioxygenase AOP1 (301 aa).

Residues Thr-158–Pro-262 form the Fe2OG dioxygenase domain. Fe cation contacts are provided by His-186, Asp-188, and His-243. Position 253 (Arg-253) interacts with 2-oxoglutarate.

It belongs to the iron/ascorbate-dependent oxidoreductase family. It depends on Fe(2+) as a cofactor.

Functionally, probable 2-oxoglutarate-dependent dioxygenase that may be involved in glucosinolates biosynthesis. May play a role in the production of aliphatic glucosinolates. This is Probable 2-oxoglutarate-dependent dioxygenase AOP1 (AOP1) from Arabidopsis thaliana (Mouse-ear cress).